The primary structure comprises 249 residues: Probable endopeptidase YafL (249 aa).

An N-terminal signal peptide occupies residues 1 to 17; it reads MSLPSIPSFVLSGLLLI. Cys-18 carries N-palmitoyl cysteine lipidation. Cys-18 carries the S-diacylglycerol cysteine lipid modification. Positions 116–243 constitute a NlpC/P60 domain; sequence HNITEVAIHR…DHFLGARRIL (128 aa). The active-site Nucleophile is the Cys-147. The Proton acceptor role is filled by His-202. The active site involves Glu-214.

This sequence belongs to the peptidase C40 family.

It is found in the cell membrane. This Escherichia coli (strain K12) protein is Probable endopeptidase YafL (yafL).